We begin with the raw amino-acid sequence, 68 residues long: Small ribosomal subunit protein bS21 (68 aa).

Residues 39–68 (PPSVKRVRKKQESERRHRKERAMRRRMMEE) form a disordered region. Residues 54–68 (RHRKERAMRRRMMEE) show a composition bias toward basic residues.

This sequence belongs to the bacterial ribosomal protein bS21 family.

The protein is Small ribosomal subunit protein bS21 of Orientia tsutsugamushi (strain Ikeda) (Rickettsia tsutsugamushi).